A 306-amino-acid polypeptide reads, in one-letter code: Mitochondrial brown fat uncoupling protein 1 (306 aa).

The Mitochondrial intermembrane portion of the chain corresponds to 1–10 (MVGTTTTDVP). The chain crosses the membrane as a helical span at residues 11–32 (PTMGVKIFSAGVAACLADVITF). Solcar repeat units lie at residues 11 to 102 (PTMG…VQEF), 110 to 200 (PSLG…MKGA), and 209 to 294 (DDVP…LKGE). The Mitochondrial matrix portion of the chain corresponds to 33 to 73 (PLDTAKVRQQIQGEFPITSGIRYKGVLGTITTLAKTEGPLK). Lys56 is a fatty acid 16:0 binding site. A helical membrane pass occupies residues 74–96 (LYSGLPAGLQRQISFASLRIGLY). The Mitochondrial intermembrane segment spans residues 97 to 115 (DTVQEFFTSGEETPSLGSK). A helical membrane pass occupies residues 116 to 132 (ISAGLTTGGVAVFIGQP). At 133-177 (TEVVKVRLQAQSHLHGLKPRYTGTYNAYRIIATTESLTSLWKGTT) the chain is on the mitochondrial matrix side. Residues 178–194 (PNLLRNVIINCTELVTY) traverse the membrane as a helical segment. Residues 195 to 211 (DLMKGALVRNEILADDV) lie on the Mitochondrial intermembrane side of the membrane. A helical membrane pass occupies residues 212 to 231 (PCHFVSALIAGFCTTLLSSP). Residues 232-265 (VDVVKTRFINSPPGQYASVPNCAMTMFTKEGPTA) lie on the Mitochondrial matrix side of the membrane. Cys253 is subject to Cysteine sulfenic acid (-SOH). The chain crosses the membrane as a helical span at residues 266 to 288 (FFKGFVPSFLRLGSWNVIMFVCF). Lys268 serves as a coordination point for fatty acid 16:0. The Mitochondrial intermembrane segment spans residues 289–306 (EKLKGELMRSRQTVDCAT).

This sequence belongs to the mitochondrial carrier (TC 2.A.29) family. In terms of assembly, most probably functions as a monomer. Binds one purine nucleotide per monomer. However, has also been suggested to function as a homodimer or a homotetramer. Tightly associates with cardiolipin in the mitochondrion inner membrane; may stabilize and regulate its activity. Post-translationally, may undergo sulfenylation upon cold exposure. May increase the sensitivity of UCP1 thermogenic function to the activation by noradrenaline probably through structural effects. May undergo ubiquitin-mediated proteasomal degradation. In terms of tissue distribution, brown adipose tissue.

The protein resides in the mitochondrion inner membrane. The enzyme catalyses H(+)(in) = H(+)(out). Its activity is regulated as follows. Has no constitutive proton transporter activity and has to be activated by long-chain fatty acids/LCFAs. Inhibited by purine nucleotides. Both purine nucleotides and LCFAs bind the cytosolic side of the transporter and directly compete to activate or inhibit it. Activated by noradrenaline and reactive oxygen species. Despite lacking canonical translational encoding for selenocysteine, a small pool of the protein has been observed to selectively incorporate selenocysteine at 'Cys-253'. Selenocysteine-modified protein is highly sensitive to redox modification and may constitute a pool of protein highly sensitive to activation by elevated levels of reactive oxygen species (ROS). Its function is as follows. Mitochondrial protein responsible for thermogenic respiration, a specialized capacity of brown adipose tissue and beige fat that participates in non-shivering adaptive thermogenesis to temperature and diet variations and more generally to the regulation of energy balance. Functions as a long-chain fatty acid/LCFA and proton symporter, simultaneously transporting one LCFA and one proton through the inner mitochondrial membrane. However, LCFAs remaining associated with the transporter via their hydrophobic tails, it results in an apparent transport of protons activated by LCFAs. Thereby, dissipates the mitochondrial proton gradient and converts the energy of substrate oxydation into heat instead of ATP. Regulates the production of reactive oxygen species/ROS by mitochondria. In Oryctolagus cuniculus (Rabbit), this protein is Mitochondrial brown fat uncoupling protein 1.